The following is a 121-amino-acid chain: Large ribosomal subunit protein bL20c (121 aa).

The protein belongs to the bacterial ribosomal protein bL20 family.

Its subcellular location is the plastid. It localises to the chloroplast. Functionally, binds directly to 23S ribosomal RNA and is necessary for the in vitro assembly process of the 50S ribosomal subunit. It is not involved in the protein synthesizing functions of that subunit. The polypeptide is Large ribosomal subunit protein bL20c (Lotus japonicus (Lotus corniculatus var. japonicus)).